A 350-amino-acid chain; its full sequence is Cephaeline 6'-O-methyltransferase CiOMT (350 aa).

Residues G193, D216, D236, M237, and K250 each contribute to the S-adenosyl-L-methionine site. Catalysis depends on H254, which acts as the Proton acceptor.

The protein belongs to the class I-like SAM-binding methyltransferase superfamily. Cation-independent O-methyltransferase family.

The protein resides in the cytoplasm. The protein localises to the cytosol. The enzyme catalyses 7'-O-demethylcephaeline + S-adenosyl-L-methionine = cephaeline + S-adenosyl-L-homocysteine + H(+). It catalyses the reaction cephaeline + S-adenosyl-L-methionine = emetine + S-adenosyl-L-homocysteine + H(+). Its pathway is alkaloid biosynthesis. With respect to regulation, inhibited by Co(2+), Ni(2+), Zn(2+) and Mn(2+) ions. Functionally, O-methyltransferase involved in the biosynthesis of ipecac and benzylisoquinoline monoterpenoid-isoquinoline alkaloids natural products, starting by the condensation of dopamine and secologanin, and including emetine and cephaeline, drugs used both as anti-protozoal (e.g. treatment of ameobiasis) and as emetic agents. Catalyzes successively the 7'-O-methylation of 7'-O-demethylcephaeline to produce cephaeline, and its 6'-O-methylation to produce emetine. This is Cephaeline 6'-O-methyltransferase CiOMT from Carapichea ipecacuanha (Ipecac).